The following is a 1118-amino-acid chain: Protein translocase subunit SecA (1118 aa).

ATP contacts are provided by residues Gln-176, 194-198 (GEGKT), and Asp-693. Residues 1034 to 1056 (QQPVQQPKYRETKDEAGSAFGGG) form a disordered region.

The protein belongs to the SecA family. As to quaternary structure, monomer and homodimer. Part of the essential Sec protein translocation apparatus which comprises SecA, SecYEG and auxiliary proteins SecDF. Other proteins may also be involved.

The protein resides in the cell inner membrane. The protein localises to the cytoplasm. It carries out the reaction ATP + H2O + cellular proteinSide 1 = ADP + phosphate + cellular proteinSide 2.. In terms of biological role, part of the Sec protein translocase complex. Interacts with the SecYEG preprotein conducting channel. Has a central role in coupling the hydrolysis of ATP to the transfer of proteins into and across the cell membrane, serving as an ATP-driven molecular motor driving the stepwise translocation of polypeptide chains across the membrane. The polypeptide is Protein translocase subunit SecA (Cytophaga hutchinsonii (strain ATCC 33406 / DSM 1761 / CIP 103989 / NBRC 15051 / NCIMB 9469 / D465)).